The primary structure comprises 244 residues: Phosphoadenosine 5'-phosphosulfate reductase (244 aa).

Residue Cys239 is the Nucleophile; cysteine thiosulfonate intermediate of the active site.

The protein belongs to the PAPS reductase family. CysH subfamily.

Its subcellular location is the cytoplasm. The catalysed reaction is [thioredoxin]-disulfide + sulfite + adenosine 3',5'-bisphosphate + 2 H(+) = [thioredoxin]-dithiol + 3'-phosphoadenylyl sulfate. Its pathway is sulfur metabolism; hydrogen sulfide biosynthesis; sulfite from sulfate: step 3/3. Functionally, catalyzes the formation of sulfite from phosphoadenosine 5'-phosphosulfate (PAPS) using thioredoxin as an electron donor. This is Phosphoadenosine 5'-phosphosulfate reductase from Salmonella schwarzengrund (strain CVM19633).